We begin with the raw amino-acid sequence, 105 residues long: Ribosomal silencing factor RsfS (105 aa).

Belongs to the Iojap/RsfS family. As to quaternary structure, interacts with ribosomal protein uL14 (rplN).

Its subcellular location is the cytoplasm. Functionally, functions as a ribosomal silencing factor. Interacts with ribosomal protein uL14 (rplN), blocking formation of intersubunit bridge B8. Prevents association of the 30S and 50S ribosomal subunits and the formation of functional ribosomes, thus repressing translation. In Escherichia coli O6:H1 (strain CFT073 / ATCC 700928 / UPEC), this protein is Ribosomal silencing factor RsfS.